The sequence spans 312 residues: MVNQSSTPGFLLLGFSEHPGLERTLFVVVLTSYLLTLVGNTLIILLSALDPKLHSPMYFFLSNLSFLDLCFTTSCVPQMLVNLWGPKKTISFLDCSVQIFIFLSLGTTECILLTVMAFDRYVAVCQPLHYATIIHPRLCWQLASVAWVIGLVESVVQTPSTLHLPFCPDRQVDDFVCEVPALIRLSCEDTSYNEIQVAVASVFILVVPLSLILVSYGAITWAVLRINSAKGRRKAFGTCSSHLTVVTLFYSSVIAVYLQPKNPYAQERGKFFGLFYAVGTPSLNPLIYTLRNKEVTRAFRRLLGKEMGLTQS.

Residues 1-23 (MVNQSSTPGFLLLGFSEHPGLER) lie on the Extracellular side of the membrane. An N-linked (GlcNAc...) asparagine glycan is attached at N3. Residues 24–47 (TLFVVVLTSYLLTLVGNTLIILLS) form a helical membrane-spanning segment. Residues 48 to 55 (ALDPKLHS) are Cytoplasmic-facing. The chain crosses the membrane as a helical span at residues 56 to 77 (PMYFFLSNLSFLDLCFTTSCVP). Residues 78–98 (QMLVNLWGPKKTISFLDCSVQ) are Extracellular-facing. A disulfide bridge connects residues C95 and C187. A helical transmembrane segment spans residues 99–118 (IFIFLSLGTTECILLTVMAF). Over 119 to 137 (DRYVAVCQPLHYATIIHPR) the chain is Cytoplasmic. The helical transmembrane segment at 138–156 (LCWQLASVAWVIGLVESVV) threads the bilayer. The Extracellular portion of the chain corresponds to 157 to 193 (QTPSTLHLPFCPDRQVDDFVCEVPALIRLSCEDTSYN). The helical transmembrane segment at 194–217 (EIQVAVASVFILVVPLSLILVSYG) threads the bilayer. At 218-234 (AITWAVLRINSAKGRRK) the chain is on the cytoplasmic side. A helical transmembrane segment spans residues 235–257 (AFGTCSSHLTVVTLFYSSVIAVY). Residues 258–270 (LQPKNPYAQERGK) lie on the Extracellular side of the membrane. A helical membrane pass occupies residues 271 to 290 (FFGLFYAVGTPSLNPLIYTL). Over 291–312 (RNKEVTRAFRRLLGKEMGLTQS) the chain is Cytoplasmic.

Belongs to the G-protein coupled receptor 1 family.

The protein localises to the cell membrane. Functionally, odorant receptor. In Homo sapiens (Human), this protein is Olfactory receptor 2H2 (OR2H2).